An 890-amino-acid polypeptide reads, in one-letter code: Alanine--tRNA ligase (890 aa).

Residues His568, His572, Cys680, and His684 each coordinate Zn(2+).

This sequence belongs to the class-II aminoacyl-tRNA synthetase family. Zn(2+) serves as cofactor.

Its subcellular location is the cytoplasm. The catalysed reaction is tRNA(Ala) + L-alanine + ATP = L-alanyl-tRNA(Ala) + AMP + diphosphate. In terms of biological role, catalyzes the attachment of alanine to tRNA(Ala) in a two-step reaction: alanine is first activated by ATP to form Ala-AMP and then transferred to the acceptor end of tRNA(Ala). Also edits incorrectly charged Ser-tRNA(Ala) and Gly-tRNA(Ala) via its editing domain. The polypeptide is Alanine--tRNA ligase (Psychrobacter arcticus (strain DSM 17307 / VKM B-2377 / 273-4)).